A 668-amino-acid chain; its full sequence is MAP kinase kinase PBS2 (668 aa).

Positions 1-15 (MEDKFANLSLHEKTG) are enriched in basic and acidic residues. Disordered regions lie at residues 1–43 (MEDK…SSHY), 61–120 (RALK…ASSK), and 181–313 (NPNR…GSSG). 3 stretches are compositionally biased toward polar residues: residues 16–43 (KSSI…SSHY), 68–91 (SVGS…QQIV), and 104–120 (SKVS…ASSK). At Ser68 the chain carries Phosphoserine. Low complexity predominate over residues 239 to 250 (AQQPQQFAPSPS). Ser269 is modified (phosphoserine). Residues 270 to 300 (NPGSLINGVQSTSTSSSTEGPHDTVGTTPRT) are compositionally biased toward polar residues. Residues 301–310 (GNSNNSSNSG) are compositionally biased toward low complexity. The Protein kinase domain occupies 360 to 623 (LEFLDELGHG…YAALTEHPWL (264 aa)). Residues 366-374 (LGHGNYGNV) and Lys389 each bind ATP. The active-site Proton acceptor is the Asp485. Ser514 carries the post-translational modification Phosphoserine. At Thr518 the chain carries Phosphothreonine.

This sequence belongs to the protein kinase superfamily. STE Ser/Thr protein kinase family. MAP kinase kinase subfamily. In terms of assembly, interacts with NBP2, PTC1, SHO1 and STE11. Activated by phosphorylation by SSK2 or SSK22. Ser/Thr phosphorylation is also necessary for SHO1-mediated activation.

The protein localises to the cytoplasm. It carries out the reaction L-seryl-[protein] + ATP = O-phospho-L-seryl-[protein] + ADP + H(+). The enzyme catalyses L-threonyl-[protein] + ATP = O-phospho-L-threonyl-[protein] + ADP + H(+). The catalysed reaction is L-tyrosyl-[protein] + ATP = O-phospho-L-tyrosyl-[protein] + ADP + H(+). In terms of biological role, kinase involved in a signal transduction pathway that is activated by changes in the osmolarity of the extracellular environment. Activates the MAP kinase HOG1 by concomitant phosphorylation at 'Thr-174' and 'Tyr-176'. This Saccharomyces cerevisiae (strain ATCC 204508 / S288c) (Baker's yeast) protein is MAP kinase kinase PBS2 (PBS2).